The sequence spans 333 residues: Ribonucleoside-diphosphate reductase small chain B (333 aa).

Fe cation-binding residues include D76, E107, and H110. Residue Y114 is part of the active site. 3 residues coordinate Fe cation: E169, E203, and H206.

It belongs to the ribonucleoside diphosphate reductase small chain family. Heterodimer of a large and a small chain. The cofactor is Fe cation. Expressed in roots, rosette leaves, stems and flowers.

Its subcellular location is the cytoplasm. It carries out the reaction a 2'-deoxyribonucleoside 5'-diphosphate + [thioredoxin]-disulfide + H2O = a ribonucleoside 5'-diphosphate + [thioredoxin]-dithiol. In terms of biological role, provides the precursors necessary for DNA synthesis. Catalyzes the biosynthesis of deoxyribonucleotides from the corresponding ribonucleotides. This is Ribonucleoside-diphosphate reductase small chain B (RNR2B) from Arabidopsis thaliana (Mouse-ear cress).